Consider the following 349-residue polypeptide: tRNA pseudouridine synthase D (349 aa).

Residue Phe-27 coordinates substrate. The Nucleophile role is filled by Asp-80. Asn-129 provides a ligand contact to substrate. The TRUD domain maps to 155-303 (GVPNYFGAQR…VEAARRAMLL (149 aa)). Phe-329 lines the substrate pocket.

The protein belongs to the pseudouridine synthase TruD family.

It carries out the reaction uridine(13) in tRNA = pseudouridine(13) in tRNA. Responsible for synthesis of pseudouridine from uracil-13 in transfer RNAs. In Escherichia coli O81 (strain ED1a), this protein is tRNA pseudouridine synthase D.